Here is a 2027-residue protein sequence, read N- to C-terminus: Mediator of RNA polymerase II transcription subunit 12 (2027 aa).

Tyr-13 is modified (phosphotyrosine). Disordered regions lie at residues 170–191, 474–516, 538–563, and 1088–1113; these read QSTSTLPTTPAPQPPTSSTPST, GAPG…MDID, MPCEGKGSPSPEKPDVEKEVKPPPKE, and TVTGGTEELPEEEGGGGSGGRRQGGR. A phosphoserine mark is found at Ser-482, Ser-512, Ser-545, and Ser-547. Over residues 549–563 the composition is skewed to basic and acidic residues; that stretch reads EKPDVEKEVKPPPKE. A phosphoserine mark is found at Ser-1105 and Ser-1116. Positions 1241–1258 are enriched in low complexity; it reads AETGSSSGSTASNMPSSS. Disordered stretches follow at residues 1241-1262, 1297-1321, and 1585-1676; these read AETGSSSGSTASNMPSSSKTKP, ELEKGQHLGSSSRKERDRQKQKSMS, and YLEP…PGSI. 2 stretches are compositionally biased toward basic and acidic residues: residues 1297 to 1316 and 1605 to 1618; these read ELEKGQHLGSSSRKERDRQK and EPEKKAPEPPKTDK. Residues 1463-1901 are interaction with CTNNB1 and GLI3; sequence LAKKLQKELG…VRSTAILPEQ (439 aa). The segment covering 1631-1640 has biased composition (basic residues); that stretch reads KKSTKGKKRS. Residue Lys-1645 is modified to N6-acetyllysine. Residue Arg-1746 is modified to Asymmetric dimethylarginine; alternate. Arg-1746 is modified (omega-N-methylarginine; alternate). Arg-1757 carries the post-translational modification Omega-N-methylarginine. Residues 1805-1848 form a disordered region; the sequence is QHTGPAGTMVPPSYSSQPYQSTHPSTNPTLVDPTRHLQQRPSGY. The segment covering 1815 to 1830 has biased composition (low complexity); the sequence is PPSYSSQPYQSTHPST. Residues Arg-1844 and Arg-1865 each carry the asymmetric dimethylarginine modification. Low complexity-rich tracts occupy residues 1965 to 1975, 1983 to 1999, and 2008 to 2021; these read QHQQQQQQQAA, SQPQFQRQGLQQTQQQQ, and LQQQLSNTQPQPST. 2 disordered regions span residues 1965–1999 and 2008–2027; these read QHQQQQQQQAAPPQPQPQSQPQFQRQGLQQTQQQQ and LQQQLSNTQPQPSTNIFGRY.

It belongs to the Mediator complex subunit 12 family. In terms of assembly, component of the Mediator complex, which is composed of MED1, MED4, MED6, MED7, MED8, MED9, MED10, MED11, MED12, MED13, MED13L, MED14, MED15, MED16, MED17, MED18, MED19, MED20, MED21, MED22, MED23, MED24, MED25, MED26, MED27, MED29, MED30, MED31, CCNC, CDK8 and CDC2L6/CDK11. The MED12, MED13, CCNC and CDK8 subunits form a distinct module termed the CDK8 module. Mediator containing the CDK8 module is less active than Mediator lacking this module in supporting transcriptional activation. Individual preparations of the Mediator complex lacking one or more distinct subunits have been variously termed ARC, CRSP, DRIP, PC2, SMCC and TRAP. Also interacts with CTNNB1 and GLI3.

Its subcellular location is the nucleus. Functionally, component of the Mediator complex, a coactivator involved in the regulated transcription of nearly all RNA polymerase II-dependent genes. Mediator functions as a bridge to convey information from gene-specific regulatory proteins to the basal RNA polymerase II transcription machinery. Mediator is recruited to promoters by direct interactions with regulatory proteins and serves as a scaffold for the assembly of a functional preinitiation complex with RNA polymerase II and the general transcription factors. This subunit may specifically regulate transcription of targets of the Wnt signaling pathway and SHH signaling pathway. The protein is Mediator of RNA polymerase II transcription subunit 12 (MED12) of Pan troglodytes (Chimpanzee).